The following is a 278-amino-acid chain: MFCTSPATRGDSSESKPGASVDVNGKMEYGSAPGPLNGRDTSRGPGAFCTPGWEIHPARLVEDINRVFLCIAQSSGRVTRDSRRLRRICLDFYLMGRTRQRPTLACWEELLQLQPTQTQCLRATLMEVSHRPPRGEDGFIEAPNVPLHRSALECDVSDDGGEDDSDDDGSTPSDVIEFRDSDAESSDGEDFIVEEESEESTDSCEPDGVPGDCYRDGDGCNTPSPKRPQRAIERYAGAETAEYTAAKALTALGEGGVDWKRRRHEAPRRHDIPPPHGV.

Disordered stretches follow at residues Met1–Ser42 and Cys154–Gln229. Residues Met1–Ala142 are IE62-binding. Composition is skewed to acidic residues over residues Asp155–Gly169 and Ala183–Glu205.

This sequence belongs to the herpesviridae ICP22 family. Interacts with IE62; this interaction modulates the function of IE62. Interacts with several components of host pre-initiation complex including GTF2E1, GTF2H2 and POLR2A; these interactions lead to repression of gene transcription. Interacts with host ASF1A; altering its ability to bind histones. In terms of processing, phosphorylated in vitro by host and by protein kinase ORF47.

It localises to the host cytoplasm. The protein resides in the host nucleus. Its subcellular location is the virion tegument. Its function is as follows. Immediate early (EI) protein that functions as a transcriptional regulator of cellular and viral mRNAs mainly by interacting with several general transcription factors thereby disorganizing the preinitiation complex at certain promoters. May additionally help to regulate levels of histones in virus-infected cells by interacting with host ASF1. By inhibiting host transcriptional program, IE63 plays a major role in the ability of VZV to overcome the innate immune response to the virus. This is Transcriptional regulator ICP22 homolog from Varicella-zoster virus (strain Dumas) (HHV-3).